We begin with the raw amino-acid sequence, 378 residues long: Putative methyltransferase spot-1 (378 aa).

It belongs to the class IV-like SAM-binding methyltransferase superfamily.

The protein localises to the cytoplasm. Its subcellular location is the cytoskeleton. It localises to the spindle. The protein resides in the chromosome. It is found in the centromere. The protein localises to the kinetochore. Its subcellular location is the microtubule organizing center. It localises to the centrosome. Required for association of the centrosomes with the poles of the bipolar mitotic spindle during metaphase. This is Putative methyltransferase spot-1 from Caenorhabditis elegans.